The following is a 415-amino-acid chain: Tyrosine--tRNA ligase (415 aa).

Tyrosine 34 is an L-tyrosine binding site. A 'HIGH' region motif is present at residues proline 39 to asparagine 48. L-tyrosine-binding residues include tyrosine 162 and glutamine 166. Positions lysine 224–serine 228 match the 'KMSKS' region motif. Lysine 227 provides a ligand contact to ATP. The S4 RNA-binding domain occupies isoleucine 346–asparagine 413.

Belongs to the class-I aminoacyl-tRNA synthetase family. TyrS type 1 subfamily. Homodimer.

The protein resides in the cytoplasm. It catalyses the reaction tRNA(Tyr) + L-tyrosine + ATP = L-tyrosyl-tRNA(Tyr) + AMP + diphosphate + H(+). Its function is as follows. Catalyzes the attachment of tyrosine to tRNA(Tyr) in a two-step reaction: tyrosine is first activated by ATP to form Tyr-AMP and then transferred to the acceptor end of tRNA(Tyr). In Ureaplasma urealyticum serovar 10 (strain ATCC 33699 / Western), this protein is Tyrosine--tRNA ligase.